The following is a 461-amino-acid chain: Argininosuccinate lyase (461 aa).

The protein belongs to the lyase 1 family. Argininosuccinate lyase subfamily.

It localises to the cytoplasm. It catalyses the reaction 2-(N(omega)-L-arginino)succinate = fumarate + L-arginine. Its pathway is amino-acid biosynthesis; L-arginine biosynthesis; L-arginine from L-ornithine and carbamoyl phosphate: step 3/3. The sequence is that of Argininosuccinate lyase from Clostridium beijerinckii (strain ATCC 51743 / NCIMB 8052) (Clostridium acetobutylicum).